Here is a 343-residue protein sequence, read N- to C-terminus: GTPase Obg (343 aa).

One can recognise an Obg domain in the interval 1-159; sequence MKFVDSASIF…LQLDMELKLM (159 aa). Residues 121–144 are disordered; the sequence is GHGGRGNQHFATSTNQAPRRSEPG. Over residues 129–138 the composition is skewed to polar residues; the sequence is HFATSTNQAP. Positions 160-323 constitute an OBG-type G domain; the sequence is ADVGLVGFPN…LKDELWREVS (164 aa). Residues 166–173, 191–195, 213–216, 280–283, and 304–306 contribute to the GTP site; these read GFPNAGKS, FTTLV, DIPG, TKMD, and SSV. The Mg(2+) site is built by Ser173 and Thr193. The tract at residues 322–343 is disordered; sequence VSMRDRPEESSDPEGEGDGGTP. The span at 331–343 shows a compositional bias: acidic residues; that stretch reads SSDPEGEGDGGTP.

Belongs to the TRAFAC class OBG-HflX-like GTPase superfamily. OBG GTPase family. Monomer. The cofactor is Mg(2+).

Its subcellular location is the cytoplasm. In terms of biological role, an essential GTPase which binds GTP, GDP and possibly (p)ppGpp with moderate affinity, with high nucleotide exchange rates and a fairly low GTP hydrolysis rate. Plays a role in control of the cell cycle, stress response, ribosome biogenesis and in those bacteria that undergo differentiation, in morphogenesis control. The protein is GTPase Obg of Chlorobium luteolum (strain DSM 273 / BCRC 81028 / 2530) (Pelodictyon luteolum).